A 593-amino-acid polypeptide reads, in one-letter code: Serine/threonine-protein kinase PAK 4 (593 aa).

A CRIB domain is found at 11–24 (ISAPSNFEHRVHTG). The linker stretch occupies residues 25-322 (FDQHEQKFTG…VVDPGDPRSY (298 aa)). Serine 41 carries the phosphoserine modification. At lysine 78 the chain carries N6-methyllysine. The disordered stretch occupies residues 95 to 303 (TRSNSLRRES…PQREPQRVSH (209 aa)). Serine 104 is subject to Phosphoserine. A compositionally biased stretch (basic and acidic residues) spans 118–133 (LEERAAPARMAPDKAG). A Phosphoserine modification is found at serine 148. The segment covering 149–164 (GDRRRVGPEKRPKSSR) has biased composition (basic and acidic residues). Serine 181 carries the phosphoserine modification. The segment covering 184–197 (DVSTPQPGSLTSGT) has biased composition (polar residues). A Phosphothreonine modification is found at threonine 187. Position 195 is a phosphoserine (serine 195). At threonine 207 the chain carries Phosphothreonine. The span at 238–258 (AAPQSSSSSRPPTRARGAPSP) shows a compositional bias: low complexity. Serine 257 and serine 266 each carry phosphoserine. The span at 267-280 (EPQLAPPARALAAP) shows a compositional bias: low complexity. A compositionally biased stretch (pro residues) spans 281–292 (AVPPAPGPPGPR). Serine 293 is modified (phosphoserine). The segment covering 294 to 303 (PQREPQRVSH) has biased composition (basic and acidic residues). Positions 323–574 (LDNFIKIGEG…AAELLKHPFL (252 aa)) constitute a Protein kinase domain. Residues 329–337 (IGEGSTGIV) and lysine 352 contribute to the ATP site. The active-site Proton acceptor is aspartate 442. At serine 476 the chain carries Phosphoserine; by autocatalysis.

Belongs to the protein kinase superfamily. STE Ser/Thr protein kinase family. STE20 subfamily. Interacts tightly with GTP-bound but not GDP-bound CDC42/p21 and weakly with RAC1. Interacts with FGFR2 and GRB2. Interacts with INKA1. Interacts with SH3RF2. Interacts with RHOU and PAXI; the PAK4-RHOU complex protects RHOU from ubiquitination and acts as a scaffold to suppport paxillin/PAXI phosphorylation. Autophosphorylated on serine residues when activated by CDC42/p21. Phosphorylated on tyrosine residues upon stimulation of FGFR2. Methylated by SETD6. In terms of processing, polyubiquitinated, leading to its proteasomal degradation.

The protein resides in the cytoplasm. It catalyses the reaction L-seryl-[protein] + ATP = O-phospho-L-seryl-[protein] + ADP + H(+). The enzyme catalyses L-threonyl-[protein] + ATP = O-phospho-L-threonyl-[protein] + ADP + H(+). With respect to regulation, inhibited by INKA1; which inhibits the serine/threonine-protein kinase activity by binding PAK4 in a substrate-like manner. Its function is as follows. Serine/threonine protein kinase that plays a role in a variety of different signaling pathways including cytoskeleton regulation, cell migration, growth, proliferation or cell survival. Activation by various effectors including growth factor receptors or active CDC42 and RAC1 results in a conformational change and a subsequent autophosphorylation on several serine and/or threonine residues. Phosphorylates and inactivates the protein phosphatase SSH1, leading to increased inhibitory phosphorylation of the actin binding/depolymerizing factor cofilin. Decreased cofilin activity may lead to stabilization of actin filaments. Phosphorylates LIMK1, a kinase that also inhibits the activity of cofilin. Phosphorylates integrin beta5/ITGB5 and thus regulates cell motility. Phosphorylates ARHGEF2 and activates the downstream target RHOA that plays a role in the regulation of assembly of focal adhesions and actin stress fibers. Stimulates cell survival by phosphorylating the BCL2 antagonist of cell death BAD. Alternatively, inhibits apoptosis by preventing caspase-8 binding to death domain receptors in a kinase independent manner. Plays a role in cell-cycle progression by controlling levels of the cell-cycle regulatory protein CDKN1A and by phosphorylating RAN. Promotes kinase-independent stabilization of RHOU, thereby contributing to focal adhesion disassembly during cell migration. This is Serine/threonine-protein kinase PAK 4 from Mus musculus (Mouse).